The sequence spans 557 residues: Dihydroxy-acid dehydratase (557 aa).

A Mg(2+)-binding site is contributed by Asp-78. Residue Cys-119 coordinates [2Fe-2S] cluster. Positions 120 and 121 each coordinate Mg(2+). Lys-121 carries the N6-carboxylysine modification. Residue Cys-191 coordinates [2Fe-2S] cluster. Residue Glu-442 participates in Mg(2+) binding. Ser-468 functions as the Proton acceptor in the catalytic mechanism.

It belongs to the IlvD/Edd family. Homodimer. [2Fe-2S] cluster serves as cofactor. It depends on Mg(2+) as a cofactor.

The enzyme catalyses (2R)-2,3-dihydroxy-3-methylbutanoate = 3-methyl-2-oxobutanoate + H2O. The catalysed reaction is (2R,3R)-2,3-dihydroxy-3-methylpentanoate = (S)-3-methyl-2-oxopentanoate + H2O. The protein operates within amino-acid biosynthesis; L-isoleucine biosynthesis; L-isoleucine from 2-oxobutanoate: step 3/4. It participates in amino-acid biosynthesis; L-valine biosynthesis; L-valine from pyruvate: step 3/4. Functions in the biosynthesis of branched-chain amino acids. Catalyzes the dehydration of (2R,3R)-2,3-dihydroxy-3-methylpentanoate (2,3-dihydroxy-3-methylvalerate) into 2-oxo-3-methylpentanoate (2-oxo-3-methylvalerate) and of (2R)-2,3-dihydroxy-3-methylbutanoate (2,3-dihydroxyisovalerate) into 2-oxo-3-methylbutanoate (2-oxoisovalerate), the penultimate precursor to L-isoleucine and L-valine, respectively. In Lachnoclostridium phytofermentans (strain ATCC 700394 / DSM 18823 / ISDg) (Clostridium phytofermentans), this protein is Dihydroxy-acid dehydratase.